The sequence spans 3423 residues: Genome polyprotein (3423 aa).

The disordered stretch occupies residues 1 to 25; the sequence is MKNPKKKSGGFRIVNMLKRGVARVS. Topologically, residues 1–104 are cytoplasmic; the sequence is MKNPKKKSGG…INARKEKKRR (104 aa). The interval 37–72 is hydrophobic; homodimerization of capsid protein C; that stretch reads LLLGHGPIRMVLAILAFLRFTAIKPSLGLINRWGSV. The propeptide at 105-122 is ER anchor for capsid protein C, removed in mature form by serine protease NS3; sequence GADTSVGIVGLLLTTAMA. The chain crosses the membrane as a helical span at residues 105 to 125; the sequence is GADTSVGIVGLLLTTAMAAEV. Over 126–249 the chain is Extracellular; that stretch reads TRRGSAYYMY…YTKHLIRVEN (124 aa). A glycan (N-linked (GlcNAc...) asparagine; by host) is linked at N192. The chain crosses the membrane as a helical span at residues 250–269; sequence WIFRNPGFALAAAAIAWLLG. The Cytoplasmic portion of the chain corresponds to 270–274; it reads SSTSQ. Residues 275 to 290 traverse the membrane as a helical segment; sequence KVIYLVMILLIAPAYS. The Extracellular segment spans residues 291 to 745; the sequence is IRCIGVSNRD…HQIFGAAFKS (455 aa). Residue K328 forms a Glycyl lysine isopeptide (Lys-Gly) (interchain with G-Cter in ubiquitin) linkage. Intrachain disulfides connect C350–C406 and C382–C411. Residues 388-401 form a fusion peptide region; sequence DRGWGNGCGLFGKG. Residue N444 is glycosylated (N-linked (GlcNAc...) asparagine; by host). 2 disulfides stabilise this stretch: C480–C581 and C598–C629. A Glycyl lysine isopeptide (Lys-Gly) (interchain with G-Cter in ubiquitin) cross-link involves residue K571. Residues 746–767 form a helical membrane-spanning segment; that stretch reads LFGGMSWFSQILIGTLLMWLGL. Over 768 to 773 the chain is Cytoplasmic; it reads NTKNGS. The helical transmembrane segment at 774-794 threads the bilayer; it reads ISLMCLALGGVLIFLSTAVSA. Residues 795 to 1177 are Lumenal-facing; it reads DVGCSVDFSK…EGLKKRMTTK (383 aa). 6 disulfides stabilise this stretch: C798-C809, C849-C937, C973-C1017, C1074-C1123, C1085-C1106, and C1107-C1110. Residues N924 and N1001 are each glycosylated (N-linked (GlcNAc...) asparagine; by host). Residues 1178–1198 traverse the membrane as a helical segment; the sequence is IIISTSMAVLVAMILGGFSMS. At 1199–1220 the chain is on the cytoplasmic side; the sequence is DLAKLAILMGATFAEMNTGGDV. A helical membrane pass occupies residues 1221–1241; that stretch reads AHLALIAAFKVRPALLVSFIF. The Lumenal segment spans residues 1242-1270; it reads RANWTPRESMLLALASCLLQTAISALEGD. The chain crosses the membrane as a helical span at residues 1271-1291; that stretch reads LMVLINGFALAWLAIRAMVVP. Residues 1292 to 1295 are Cytoplasmic-facing; that stretch reads RTDN. Residues 1296–1316 form a helical membrane-spanning segment; it reads ITLAILAALTPLARGTLLVAW. The Lumenal segment spans residues 1317-1345; that stretch reads RAGLATCGGFMLLSLKGKGSVKKNLPFVM. Residues 1346 to 1366 form a helical membrane-spanning segment; that stretch reads ALGLTAVRLVDPINVVGLLLL. Over 1367 to 1373 the chain is Cytoplasmic; that stretch reads TRSGKRS. A helical transmembrane segment spans residues 1374–1394; that stretch reads WPPSEVLTAVGLICALAGGFA. At 1395-1397 the chain is on the lumenal side; the sequence is KAD. Residues 1398–1418 traverse the membrane as a helical segment; it reads IEMAGPMAAVGLLIVSYVVSG. The Cytoplasmic portion of the chain corresponds to 1419-1472; sequence KSVDMYIERAGDITWEKDAEVTGNSPRLDVALDESGDFSLVEDDGPPMREIILK. The tract at residues 1425 to 1464 is interacts with and activates NS3 protease; that stretch reads IERAGDITWEKDAEVTGNSPRLDVALDESGDFSLVEDDGP. The interval 1429-1451 is disordered; it reads GDITWEKDAEVTGNSPRLDVALD. The segment at residues 1473 to 1493 is an intramembrane region (helical); that stretch reads VVLMTICGMNPIAIPFAAGAW. Over 1494-2170 the chain is Lumenal; sequence YVYVKTGKRS…KAAAAQLPET (677 aa). In terms of domain architecture, Peptidase S7 spans 1503-1680; the sequence is SGALWDVPAP…RREEETPVEC (178 aa). Active-site charge relay system; for serine protease NS3 activity residues include H1553, D1577, and S1637. The region spanning 1683-1839 is the Helicase ATP-binding domain; it reads PSMLKKKQLT…DSNSPIMDTE (157 aa). The segment at 1687-1690 is important for RNA-binding; sequence KKKQ. 1696 to 1703 is an ATP binding site; that stretch reads LHPGAGKT. A DEAH box motif is present at residues 1787–1790; sequence DEAH. The region spanning 1834–2013 is the Helicase C-terminal domain; that stretch reads PIMDTEVEVP…GLIASLYRPE (180 aa). K1891 is subject to N6-acetyllysine; by host. The chain crosses the membrane as a helical span at residues 2171–2191; sequence LETIMLLGLLGTVSLGIFFVL. Residues 2192–2195 are Lumenal-facing; sequence MRNK. The helical intramembrane region spans 2196 to 2216; that stretch reads GIGKMGFGMVTLGASAWLMWL. Residues 2217–2218 lie on the Cytoplasmic side of the membrane; it reads SE. Residues 2219–2239 traverse the membrane as a helical segment; it reads IEPARIACVLIVVFLLLVVLI. The Lumenal portion of the chain corresponds to 2240 to 2254; it reads PEPEKQRSPQDNQMA. The segment at residues 2255–2269 is an intramembrane region (helical); it reads IIIMVAVGLLGLITA. Residues 2270–2307 are Lumenal-facing; sequence NELGWLERTKSDLSHLMGRREEGATIGFSMDIDLRPAS. The segment at residues 2308-2328 is an intramembrane region (helical); sequence AWAIYAALTTFITPAVQHAVT. Over 2329–2344 the chain is Lumenal; the sequence is TSYNNYSLMAMATQAG. Residues 2345 to 2365 form a helical membrane-spanning segment; it reads VLFGMGKGMPFYAWDFGVPLL. Over 2366–2375 the chain is Cytoplasmic; it reads MIGCYSQLTP. A helical membrane pass occupies residues 2376-2396; that stretch reads LTLIVAIILLVAHYMYLIPGL. Residues 2397–2441 lie on the Lumenal side of the membrane; that stretch reads QAAAARAAQKRTAAGIMKNPVVDGIVVTDIDTMTIDPQVEKKMGQ. A helical membrane pass occupies residues 2442 to 2462; that stretch reads VLLIAVAVSSAILSRTAWGWG. Residues 2463 to 3423 lie on the Cytoplasmic side of the membrane; that stretch reads EAGALITAAT…GEEGSTPGVL (961 aa). The mRNA cap 0-1 NS5-type MT domain occupies 2521–2785; it reads GGGTGETLGE…DVNLGSGTRA (265 aa). 2533 to 2539 lines the GTP pocket; it reads KARLNQM. S2576 serves as a coordination point for S-adenosyl-L-methionine. S2576 carries the post-translational modification Phosphoserine. Catalysis depends on K2581, which acts as the For 2'-O-MTase activity. Positions 2597-2600 are SUMO-interacting motif (SIM); sequence VIDL. S-adenosyl-L-methionine contacts are provided by G2606, W2607, T2624, K2625, H2630, E2631, D2651, V2652, D2666, and I2667. D2666 functions as the For 2'-O-MTase activity in the catalytic mechanism. Residue 2669-2675 coordinates GTP; the sequence is ESSSSPE. The active-site For 2'-O-MTase activity is the K2702. 2733 to 2735 lines the GTP pocket; that stretch reads RNS. E2738 serves as the catalytic For 2'-O-MTase activity. Y2740 is an S-adenosyl-L-methionine binding site. The short motif at 2908–2914 is the Nuclear localization signal (NLS) element; that stretch reads KHKRPRV. Positions 2959, 2963, 2968, and 2971 each coordinate Zn(2+). The 151-residue stretch at 3049–3199 folds into the RdRp catalytic domain; the sequence is GRMYADDTAG…KPIDDRFAHA (151 aa). 3 residues coordinate Zn(2+): H3234, C3250, and C3369.

The protein in the N-terminal section; belongs to the class I-like SAM-binding methyltransferase superfamily. mRNA cap 0-1 NS5-type methyltransferase family. Homodimer. Interacts with host SERTAD3; this interaction promotes capsid protein C degradation. Interacts with host CAPRIN1; this interaction is probably linked to the inhibition of stress granules formation by the virus. Interacts with host G3BP1; this interaction is probably linked to the inhibition of stress granules formation by the virus. As to quaternary structure, forms heterodimers with envelope protein E in the endoplasmic reticulum and Golgi. Interacts with non-structural protein 2A. In terms of assembly, homodimer; in the endoplasmic reticulum and Golgi. Interacts with host TYRO3, AXL and DC-SIGN proteins. Interacts with non-structural protein 2A. Interacts with host HAVCR1; this interaction likely mediates virus attachment to host cell. Interacts with host NCAM1. Interacts with host HSPA5. Interacts with Aedes aegypti SRPN25, APY and venom allergen-1 salivary proteins; the interactions do not affect Zika virus replication in human endothelial cells and keratinocytes. Homodimer; Homohexamer when secreted. Interacts with host TBK1. Interacts with host USP8. Interacts with envelope protein E. As to quaternary structure, interacts with the structural protein prM/E complex, and the NS2B/NS3 protease complex. In terms of assembly, forms a heterodimer with serine protease NS3. May form homooligomers. Interacts with human SPCS1. Interacts with non-structural protein 2A. Forms a heterodimer with NS2B. Interacts with NS4B. Interacts with unphosphorylated RNA-directed RNA polymerase NS5; this interaction stimulates RNA-directed RNA polymerase NS5 guanylyltransferase activity. Interacts with non-structural protein 2A. Interacts with host SHFL; this interaction promotes NS3 degradation via a lysosome-dependent pathway. Interacts with host CEP63; this interaction disorganizes the centrosome and inhibits host innate immune response. As to quaternary structure, may interact with host ANKLE2; the interaction may cause defects in brain development, such as microcephaly. May interact with host SRPRA and SEC61G. In terms of assembly, interacts with serine protease NS3. Interacts with NS1. Homodimer; dimerization may negatively regulate the GTase activity, a crucial step in the capping process. Interacts with host STAT2; this interaction inhibits the phosphorylation of the latter, and, when all viral proteins are present (polyprotein), targets STAT2 for degradation. Interacts with host TBK1 and IKBKE; these interactions lead to the inhibition of the host RIG-I signaling pathway. Interacts with host PAF1 complex; the interaction may prevent the recruitment of the host PAF1 complex to interferon-responsive genes, and thus reduces the immune response. Interacts with serine protease NS3. Interacts with host KPNA2. Interacts with host ZSWIM8; this interaction allows STAT2 binding to ZSWIM8 and subsequent proteasomal degradation leading to inhibition of interferon signaling. In terms of processing, specific enzymatic cleavages in vivo yield mature proteins. Cleavages in the lumen of endoplasmic reticulum are performed by host signal peptidase, whereas cleavages in the cytoplasmic side are performed by serine protease NS3. Signal cleavage at the 2K-4B site requires a prior NS3 protease-mediated cleavage at the 4A-2K site. Post-translationally, cleaved in post-Golgi vesicles by a host furin, releasing the mature small envelope protein M, and peptide pr. This cleavage is incomplete as up to 30% of viral particles still carry uncleaved prM. N-glycosylation plays a role in virulence in mammalian and mosquito hosts, but may have no effect on neurovirulence. In terms of processing, ubiquitination by host TRIM7 promotes virus attachment and fusion of the virus and the host endosome membrane. Post-translationally, N-glycosylated. The excreted form is glycosylated, which is required for efficient secretion of the protein from infected cells. Ubiquitination by host TRIM22 leads to proteasomal degradation. In terms of processing, acetylated by host KAT5. Acetylation modulates NS3 RNA-binding and unwinding activities and plays an important positive role for viral replication. Post-translationally, phosphorylated on serines residues. This phosphorylation may trigger NS5 nuclear localization. Sumoylated, required for regulating IFN induced interferon stimulated genes/ISGs.

The protein resides in the virion. It localises to the host nucleus. Its subcellular location is the host cytoplasm. It is found in the host perinuclear region. The protein localises to the secreted. The protein resides in the virion membrane. It localises to the host endoplasmic reticulum membrane. The catalysed reaction is a 5'-end (5'-triphosphoguanosine)-ribonucleoside in mRNA + S-adenosyl-L-methionine = a 5'-end (N(7)-methyl 5'-triphosphoguanosine)-ribonucleoside in mRNA + S-adenosyl-L-homocysteine. It carries out the reaction a 5'-end (N(7)-methyl 5'-triphosphoguanosine)-ribonucleoside in mRNA + S-adenosyl-L-methionine = a 5'-end (N(7)-methyl 5'-triphosphoguanosine)-(2'-O-methyl-ribonucleoside) in mRNA + S-adenosyl-L-homocysteine + H(+). It catalyses the reaction RNA(n) + a ribonucleoside 5'-triphosphate = RNA(n+1) + diphosphate. The enzyme catalyses Selective hydrolysis of -Xaa-Xaa-|-Yaa- bonds in which each of the Xaa can be either Arg or Lys and Yaa can be either Ser or Ala.. The catalysed reaction is a ribonucleoside 5'-triphosphate + H2O = a ribonucleoside 5'-diphosphate + phosphate + H(+). It carries out the reaction ATP + H2O = ADP + phosphate + H(+). In terms of biological role, plays a role in virus budding by binding to the cell membrane and gathering the viral RNA into a nucleocapsid that forms the core of the mature virus particle. During virus entry, may induce genome penetration into the host cytoplasm after hemifusion induced by the surface proteins. Can migrate to the cell nucleus where it modulates host functions. Inhibits the integrated stress response (ISR) in the infected cell. Its function is as follows. Inhibits RNA silencing by interfering with host Dicer. Functionally, prevents premature fusion activity of envelope proteins in trans-Golgi by binding to envelope protein E at pH 6.0. After virion release in extracellular space, gets dissociated from E dimers. Plays a role in host immune defense modulation and protection of envelope protein E during virion synthesis. PrM-E cleavage is inefficient, many virions are only partially matured and immature prM-E proteins could play a role in immune evasion. Contributes to fetal microcephaly in humans. Acts as a chaperone for envelope protein E during intracellular virion assembly by masking and inactivating envelope protein E fusion peptide. prM is the only viral peptide matured by host furin in the trans-Golgi network probably to avoid catastrophic activation of the viral fusion activity in acidic Golgi compartment prior to virion release. In terms of biological role, may play a role in virus budding. Exerts cytotoxic effects by activating a mitochondrial apoptotic pathway through M ectodomain. May display a viroporin activity. Its function is as follows. Binds to host cell surface receptors and mediates fusion between viral and cellular membranes. Efficient virus attachment to cell is, at least in part, mediated by host HAVCR1 in a cell-type specific manner. In addition, host NCAM1 can also be used as entry receptor. Interaction with host HSPA5 plays an important role in the early stages of infection as well. Envelope protein is synthesized in the endoplasmic reticulum and forms a heterodimer with protein prM. The heterodimer plays a role in virion budding in the ER, and the newly formed immature particle is covered with 60 spikes composed of heterodimers between precursor prM and envelope protein E. The virion is transported to the Golgi apparatus where the low pH causes the dissociation of PrM-E heterodimers and formation of E homodimers. PrM-E cleavage is inefficient, many virions are only partially matured and immature prM-E proteins could play a role in immune evasion. Functionally, plays a role in the inhibition of host RLR-induced interferon-beta activation by targeting TANK-binding kinase 1/TBK1. In addition, recruits the host deubiquitinase USP8 to cleave 'Lys-11'-linked polyubiquitin chains from caspase-1/CASP1 thus inhibiting its proteasomal degradation. In turn, stabilized CASP1 promotes cleavage of cGAS, which inhibits its ability to recognize mitochondrial DNA release and initiate type I interferon signaling. Component of the viral RNA replication complex that recruits genomic RNA, the structural protein prM/E complex, and the NS2B/NS3 protease complex to the virion assembly site and orchestrates virus morphogenesis. Antagonizes also the host MDA5-mediated induction of alpha/beta interferon antiviral response. May disrupt adherens junction formation and thereby impair proliferation of radial cells in the host cortex. In terms of biological role, required cofactor for the serine protease function of NS3. Its function is as follows. Displays three enzymatic activities: serine protease, NTPase and RNA helicase. NS3 serine protease, in association with NS2B, performs its autocleavage and cleaves the polyprotein at dibasic sites in the cytoplasm: C-prM, NS2A-NS2B, NS2B-NS3, NS3-NS4A, NS4A-2K and NS4B-NS5. NS3 RNA helicase binds RNA and unwinds dsRNA in the 3' to 5' direction. Inhibits the integrated stress response (ISR) in the infected cell by blocking stress granules assembly. Disrupts host centrosome organization in a CEP63-dependent manner to degrade host TBK1 and inhibits innate immune response. Functionally, regulates the ATPase activity of the NS3 helicase activity. NS4A allows NS3 helicase to conserve energy during unwinding. Cooperatively with NS4B suppresses the Akt-mTOR pathway and leads to cellular dysregulation. By inhibiting host ANKLE2 functions, may cause defects in brain development, such as microcephaly. Also antagonizes the host MDA5-mediated induction of alpha/beta interferon antiviral response. Inhibits the integrated stress response (ISR) in the infected cell by blocking stress granules assembly. Functions as a signal peptide for NS4B and is required for the interferon antagonism activity of the latter. In terms of biological role, induces the formation of ER-derived membrane vesicles where the viral replication takes place. Also plays a role in the inhibition of host RLR-induced interferon-beta production at TANK-binding kinase 1/TBK1 level. Cooperatively with NS4A suppresses the Akt-mTOR pathway and leads to cellular dysregulation. Its function is as follows. Replicates the viral (+) and (-) RNA genome, and performs the capping of genomes in the cytoplasm. Methylates viral RNA cap at guanine N-7 and ribose 2'-O positions. Once sufficient NS5 is expressed, binds to the cap-proximal structure and inhibits further translation of the viral genome. Besides its role in RNA genome replication, also prevents the establishment of a cellular antiviral state by blocking the interferon-alpha/beta (IFN-alpha/beta) signaling pathway. Mechanistically, interferes with host kinases TBK1 and IKKE upstream of interferon regulatory factor 3/IRF3 to inhibit the RIG-I pathway. Also antagonizes type I interferon signaling by targeting STAT2 for degradation by the proteasome thereby preventing activation of JAK-STAT signaling pathway. Mechanistically, acts as a scaffold protein to connect host ZSWIM8/CUL3 ligase complex and STAT2, leading to STAT2 degradation. Within the host nucleus, disrupts host SUMO1 and STAT2 co-localization with PML, resulting in PML degradation. May also reduce immune responses by preventing the recruitment of the host PAF1 complex to interferon-responsive genes. This Zika virus (isolate ZIKV/Human/French Polynesia/10087PF/2013) (ZIKV) protein is Genome polyprotein.